A 123-amino-acid chain; its full sequence is Small ribosomal subunit protein uS12 (123 aa).

The tract at residues 1–27 (MPTIQQLIRKPRQPKIKRSKSMHLQEC) is disordered. Residues 9–21 (RKPRQPKIKRSKS) are compositionally biased toward basic residues. D89 carries the post-translational modification 3-methylthioaspartic acid.

This sequence belongs to the universal ribosomal protein uS12 family. As to quaternary structure, part of the 30S ribosomal subunit. Contacts proteins S8 and S17. May interact with IF1 in the 30S initiation complex.

With S4 and S5 plays an important role in translational accuracy. Its function is as follows. Interacts with and stabilizes bases of the 16S rRNA that are involved in tRNA selection in the A site and with the mRNA backbone. Located at the interface of the 30S and 50S subunits, it traverses the body of the 30S subunit contacting proteins on the other side and probably holding the rRNA structure together. The combined cluster of proteins S8, S12 and S17 appears to hold together the shoulder and platform of the 30S subunit. This Roseobacter denitrificans (strain ATCC 33942 / OCh 114) (Erythrobacter sp. (strain OCh 114)) protein is Small ribosomal subunit protein uS12.